A 355-amino-acid chain; its full sequence is Uroporphyrinogen decarboxylase (355 aa).

Substrate contacts are provided by residues 36–40 (RQAGR), aspartate 85, tyrosine 160, serine 215, and histidine 334.

Belongs to the uroporphyrinogen decarboxylase family. Homodimer.

Its subcellular location is the cytoplasm. The enzyme catalyses uroporphyrinogen III + 4 H(+) = coproporphyrinogen III + 4 CO2. The protein operates within porphyrin-containing compound metabolism; protoporphyrin-IX biosynthesis; coproporphyrinogen-III from 5-aminolevulinate: step 4/4. Catalyzes the decarboxylation of four acetate groups of uroporphyrinogen-III to yield coproporphyrinogen-III. The polypeptide is Uroporphyrinogen decarboxylase (Rhodococcus erythropolis (strain PR4 / NBRC 100887)).